The following is a 146-amino-acid chain: 3-hydroxyacyl-[acyl-carrier-protein] dehydratase FabZ (146 aa).

H48 is a catalytic residue.

Belongs to the thioester dehydratase family. FabZ subfamily.

It localises to the cytoplasm. The enzyme catalyses a (3R)-hydroxyacyl-[ACP] = a (2E)-enoyl-[ACP] + H2O. Involved in unsaturated fatty acids biosynthesis. Catalyzes the dehydration of short chain beta-hydroxyacyl-ACPs and long chain saturated and unsaturated beta-hydroxyacyl-ACPs. The protein is 3-hydroxyacyl-[acyl-carrier-protein] dehydratase FabZ of Campylobacter lari (strain RM2100 / D67 / ATCC BAA-1060).